The chain runs to 246 residues: Aspartate/glutamate leucyltransferase (246 aa).

It belongs to the R-transferase family. Bpt subfamily.

The protein resides in the cytoplasm. The enzyme catalyses N-terminal L-glutamyl-[protein] + L-leucyl-tRNA(Leu) = N-terminal L-leucyl-L-glutamyl-[protein] + tRNA(Leu) + H(+). The catalysed reaction is N-terminal L-aspartyl-[protein] + L-leucyl-tRNA(Leu) = N-terminal L-leucyl-L-aspartyl-[protein] + tRNA(Leu) + H(+). Its function is as follows. Functions in the N-end rule pathway of protein degradation where it conjugates Leu from its aminoacyl-tRNA to the N-termini of proteins containing an N-terminal aspartate or glutamate. The chain is Aspartate/glutamate leucyltransferase from Rhodospirillum rubrum (strain ATCC 11170 / ATH 1.1.1 / DSM 467 / LMG 4362 / NCIMB 8255 / S1).